We begin with the raw amino-acid sequence, 432 residues long: 5'-deoxyadenosine deaminase (432 aa).

Positions 63 and 65 each coordinate Zn(2+). 2 residues coordinate substrate: Glu-92 and His-184. His-211 contacts Zn(2+). 2 residues coordinate substrate: Glu-214 and Asp-299. Zn(2+) is bound at residue Asp-299.

It belongs to the metallo-dependent hydrolases superfamily. MTA/SAH deaminase family. In terms of assembly, homotetramer. The cofactor is Zn(2+).

It carries out the reaction 5'-deoxyadenosine + H2O + H(+) = 5'-deoxyinosine + NH4(+). The enzyme catalyses S-adenosyl-L-homocysteine + H2O + H(+) = S-inosyl-L-homocysteine + NH4(+). The catalysed reaction is S-methyl-5'-thioadenosine + H2O + H(+) = S-methyl-5'-thioinosine + NH4(+). It catalyses the reaction adenosine + H2O + H(+) = inosine + NH4(+). It functions in the pathway amino-acid biosynthesis; S-adenosyl-L-methionine biosynthesis. In terms of biological role, catalyzes the deamination of three SAM-derived enzymatic products, namely 5'-deoxyadenosine, S-adenosyl-L-homocysteine, and 5'-methylthioadenosine, to produce the inosine analogs. Can also deaminate adenosine. The preferred substrate for this enzyme is 5'-deoxyadenosine, but all these substrates are efficiently deaminated. Likely functions in a S-adenosyl-L-methionine (SAM) recycling pathway from S-adenosyl-L-homocysteine (SAH) produced from SAM-dependent methylation reactions. May also be involved in the recycling of 5'-deoxyadenosine, whereupon the 5'-deoxyribose moiety of 5'-deoxyinosine is further metabolized to deoxyhexoses used for the biosynthesis of aromatic amino acids in methanogens. The polypeptide is 5'-deoxyadenosine deaminase (Methanosarcina acetivorans (strain ATCC 35395 / DSM 2834 / JCM 12185 / C2A)).